A 319-amino-acid polypeptide reads, in one-letter code: MTKPPLTLYLAAPRGFCAGVDRAIKIVEMALEKWGAPVYVRHEIVHNKFVVDRLRDMGAVFVEELDEAPTDRPVIFSAHGVPKSVPAEAERRNMVYVDATCPLVSKVHLEAERHHENGLQMIMIGHAGHPETIGTMGQLPEGEVLLVETVEDVAGLEVRDPERLAYITQTTLSIDDTAAIVAALRERFPAINIPRKEDICYATTNRQGAVKALSDRIEALLVIGAPNSSNSRRLVEVGRAAGCRVAQLVQRATEIDWDSLQGVTAVGVAAGASAPEVLVDEVIAAFRERFDTTVELVETVKERVEFKVPRILREAAETP.

Cys-17 contributes to the [4Fe-4S] cluster binding site. Residues His-46 and His-79 each coordinate (2E)-4-hydroxy-3-methylbut-2-enyl diphosphate. Positions 46 and 79 each coordinate dimethylallyl diphosphate. Positions 46 and 79 each coordinate isopentenyl diphosphate. Cys-101 serves as a coordination point for [4Fe-4S] cluster. (2E)-4-hydroxy-3-methylbut-2-enyl diphosphate is bound at residue His-129. His-129 contacts dimethylallyl diphosphate. Residue His-129 coordinates isopentenyl diphosphate. Glu-131 functions as the Proton donor in the catalytic mechanism. Thr-170 is a (2E)-4-hydroxy-3-methylbut-2-enyl diphosphate binding site. [4Fe-4S] cluster is bound at residue Cys-200. (2E)-4-hydroxy-3-methylbut-2-enyl diphosphate is bound by residues Ser-228, Ser-229, Asn-230, and Ser-273. Dimethylallyl diphosphate-binding residues include Ser-228, Ser-229, Asn-230, and Ser-273. Isopentenyl diphosphate contacts are provided by Ser-228, Ser-229, Asn-230, and Ser-273.

This sequence belongs to the IspH family. [4Fe-4S] cluster is required as a cofactor.

It catalyses the reaction isopentenyl diphosphate + 2 oxidized [2Fe-2S]-[ferredoxin] + H2O = (2E)-4-hydroxy-3-methylbut-2-enyl diphosphate + 2 reduced [2Fe-2S]-[ferredoxin] + 2 H(+). The enzyme catalyses dimethylallyl diphosphate + 2 oxidized [2Fe-2S]-[ferredoxin] + H2O = (2E)-4-hydroxy-3-methylbut-2-enyl diphosphate + 2 reduced [2Fe-2S]-[ferredoxin] + 2 H(+). The protein operates within isoprenoid biosynthesis; dimethylallyl diphosphate biosynthesis; dimethylallyl diphosphate from (2E)-4-hydroxy-3-methylbutenyl diphosphate: step 1/1. Its pathway is isoprenoid biosynthesis; isopentenyl diphosphate biosynthesis via DXP pathway; isopentenyl diphosphate from 1-deoxy-D-xylulose 5-phosphate: step 6/6. In terms of biological role, catalyzes the conversion of 1-hydroxy-2-methyl-2-(E)-butenyl 4-diphosphate (HMBPP) into a mixture of isopentenyl diphosphate (IPP) and dimethylallyl diphosphate (DMAPP). Acts in the terminal step of the DOXP/MEP pathway for isoprenoid precursor biosynthesis. The chain is 4-hydroxy-3-methylbut-2-enyl diphosphate reductase from Cereibacter sphaeroides (strain ATCC 17025 / ATH 2.4.3) (Rhodobacter sphaeroides).